A 378-amino-acid polypeptide reads, in one-letter code: Glutamate 5-kinase (378 aa).

An ATP-binding site is contributed by lysine 19. Residues serine 59, aspartate 146, and asparagine 158 each contribute to the substrate site. ATP contacts are provided by residues 178–179 (TD) and 220–226 (TGGMATK). Residues 285-363 (QGQIQVDAGA…GEIGEILGYK (79 aa)) enclose the PUA domain.

It belongs to the glutamate 5-kinase family.

The protein resides in the cytoplasm. It carries out the reaction L-glutamate + ATP = L-glutamyl 5-phosphate + ADP. It functions in the pathway amino-acid biosynthesis; L-proline biosynthesis; L-glutamate 5-semialdehyde from L-glutamate: step 1/2. In terms of biological role, catalyzes the transfer of a phosphate group to glutamate to form L-glutamate 5-phosphate. This Moorella thermoacetica (strain ATCC 39073 / JCM 9320) protein is Glutamate 5-kinase.